A 284-amino-acid polypeptide reads, in one-letter code: MQREFVSGAGLGLRRALLEPLGAGDGVRVDFLEVAPENWIGIGGRLGRQFRELTERLPFLCHGLSLNLGGYAPLDMSLLRAIKGFIEQHDIRAYSEHLSACADDGQLYDLMPLPFSDESVRRVAERVRVVQDVLERPLIVENVSAYARLPGELEEVDFVRAVLEEADCQLLLDVNNVYVNACNFGFDAHAYIAAMPSRRIAYLHMAGHDEQGASLKIDTHGAPVCDPVWELLAHAYACHGERPTLLERDFNLPPLSELYAETDRIRELQRRSGEAQLRSLGYGT.

This sequence belongs to the UPF0276 family.

The polypeptide is UPF0276 protein PA3283 (Pseudomonas aeruginosa (strain ATCC 15692 / DSM 22644 / CIP 104116 / JCM 14847 / LMG 12228 / 1C / PRS 101 / PAO1)).